The following is a 190-amino-acid chain: Glucose-6-phosphate isomerase (190 aa).

Residues His-89, His-91, Glu-98, and His-137 each coordinate Fe cation.

Belongs to the archaeal-type GPI family. Homodimer. Fe cation serves as cofactor.

The protein resides in the cytoplasm. The enzyme catalyses alpha-D-glucose 6-phosphate = beta-D-fructose 6-phosphate. It functions in the pathway carbohydrate degradation; glycolysis; D-glyceraldehyde 3-phosphate and glycerone phosphate from D-glucose: step 2/4. Its activity is regulated as follows. Inhibited by mannose 6-phosphate, fructose 1-phosphate and fructose 1,6-bisphosphate. Its activity is also inhibited by Cobalt (II) ions &lt; EDTA &lt; nickel (II) ions &lt; zinc (II) ions &lt;&lt; cadmium (II) ions &lt; copper (II) ions. Sodium and potassium ions and manganese ions show little or no effect on activity. In Thermococcus litoralis, this protein is Glucose-6-phosphate isomerase (pgiA).